Consider the following 431-residue polypeptide: Glucose-1-phosphate adenylyltransferase (431 aa).

Beta-D-fructose 1,6-bisphosphate is bound at residue Lys39. 3 residues coordinate AMP: Arg40, His46, and Arg52. Tyr114 is a binding site for alpha-D-glucose 1-phosphate. Residue Arg130 participates in AMP binding. Alpha-D-glucose 1-phosphate contacts are provided by residues Gly179, 194 to 195 (EK), and Ser212. Arg386 serves as a coordination point for AMP. 429–431 (QER) contributes to the beta-D-fructose 1,6-bisphosphate binding site.

Belongs to the bacterial/plant glucose-1-phosphate adenylyltransferase family. Homotetramer.

It catalyses the reaction alpha-D-glucose 1-phosphate + ATP + H(+) = ADP-alpha-D-glucose + diphosphate. It functions in the pathway glycan biosynthesis; glycogen biosynthesis. With respect to regulation, allosterically activated by fructose-1,6-bisphosphate (F16BP) and inhibited by AMP. In terms of biological role, involved in the biosynthesis of ADP-glucose, a building block required for the elongation reactions to produce glycogen. Catalyzes the reaction between ATP and alpha-D-glucose 1-phosphate (G1P) to produce pyrophosphate and ADP-Glc. This Klebsiella pneumoniae subsp. pneumoniae (strain ATCC 700721 / MGH 78578) protein is Glucose-1-phosphate adenylyltransferase.